The following is a 346-amino-acid chain: Tryptophan--tRNA ligase (346 aa).

ATP is bound by residues 11 to 13 and 19 to 20; these read RPT and GH. The short motif at 12-20 is the 'HIGH' region element; it reads PTGKLHLGH. Asp-143 is an L-tryptophan binding site. ATP contacts are provided by residues 155–157, Leu-193, and 201–205; these read GKD and KMSKS. A 'KMSKS' region motif is present at residues 201–205; that stretch reads KMSKS.

The protein belongs to the class-I aminoacyl-tRNA synthetase family. Homodimer.

It localises to the cytoplasm. It catalyses the reaction tRNA(Trp) + L-tryptophan + ATP = L-tryptophyl-tRNA(Trp) + AMP + diphosphate + H(+). Its function is as follows. Catalyzes the attachment of tryptophan to tRNA(Trp). This is Tryptophan--tRNA ligase from Chlamydia muridarum (strain MoPn / Nigg).